Here is a 456-residue protein sequence, read N- to C-terminus: High mobility group B protein 6 (456 aa).

4 disordered regions span residues 1-42 (MATN…KSAK), 117-142 (SSLT…KRPS), 238-258 (AEQD…PKHP), and 349-389 (MLKK…YFLF). A compositionally biased stretch (basic residues) spans 11–21 (KKPRNSRKALK). The segment at residues 138-206 (TKRPSSSYVL…AYLQVIAKEK (69 aa)) is a DNA-binding region (HMG box 1). Over residues 240-254 (QDNKKKNKKEKDPLK) the composition is skewed to basic and acidic residues. The HMG box 2 DNA-binding region spans 255–321 (PKHPVSAFLV…TYLQAMEEYK (67 aa)). Residues 354–363 (EKTDNLIKKE) are compositionally biased toward basic and acidic residues. Positions 379-447 (PKKPASSYFL…AYKKEVEAYN (69 aa)) form a DNA-binding region, HMG box 3.

It localises to the nucleus. This Arabidopsis thaliana (Mouse-ear cress) protein is High mobility group B protein 6 (HMGB6).